The primary structure comprises 431 residues: Magnetosome protein MamH (431 aa).

A run of 11 helical transmembrane segments spans residues 21–41 (LLSA…PLFL), 57–77 (ANVQ…LGYL), 86–106 (IIVA…LSPW), 107–127 (IGGA…IMSA), 156–176 (TAFM…QIPA), 178–198 (AGIA…AWLA), 243–263 (MVFV…LIKV), 274–294 (ILIG…RSFI), 302–321 (AVLL…GFII), 358–378 (LLGS…IFFV), and 380–400 (VGGF…TGVG).

It belongs to the major facilitator superfamily.

Its subcellular location is the magnetosome membrane. In terms of biological role, required for correct biomineralization of the magnetosome; probably transports some form of iron. Partially functionally redundant with MamZ. The chain is Magnetosome protein MamH (mamH) from Paramagnetospirillum magneticum (strain ATCC 700264 / AMB-1) (Magnetospirillum magneticum).